The following is a 62-amino-acid chain: MGQCSSATKMRRKRKREEECCRESMERRNKGCLAMVKERRSRFYIARRCILMLLCWHKYANS.

Residues 27-58 are required for DVL/RTFL small polypeptide activity; the sequence is RRNKGCLAMVKERRSRFYIARRCILMLLCWHK. Residues 39–56 form a helical membrane-spanning segment; it reads RRSRFYIARRCILMLLCW.

The protein belongs to the DVL/RTFL small polypeptides family.

The protein localises to the cell membrane. In terms of biological role, small polypeptide acting as a regulatory molecule which coordinates cellular responses required for differentiation, growth and development, probably by restricting polar cell proliferation in lateral organs and coordinating socket cell recruitment and differentiation at trichome sites. The protein is Small polypeptide DEVIL 17 of Arabidopsis thaliana (Mouse-ear cress).